The primary structure comprises 152 residues: MKTPIELKILDSRIGSEFPLPAYATPGSAGMDLRAMLDTNLTIAPGETVLIPTGIAVHVADPSLAAVILPRSGMGHKHGIVLGNLVGLIDSDYQGPLMVSCWNRGNEPYTLQIGDRLAQLVFVPVVQAEFKLVDEFDTSMRGEGGFGHSGTR.

Substrate is bound by residues 71-73 (RSG), Asn-84, 88-90 (LID), and Met-98.

The protein belongs to the dUTPase family. The cofactor is Mg(2+).

The catalysed reaction is dUTP + H2O = dUMP + diphosphate + H(+). It functions in the pathway pyrimidine metabolism; dUMP biosynthesis; dUMP from dCTP (dUTP route): step 2/2. Its function is as follows. This enzyme is involved in nucleotide metabolism: it produces dUMP, the immediate precursor of thymidine nucleotides and it decreases the intracellular concentration of dUTP so that uracil cannot be incorporated into DNA. This Shewanella amazonensis (strain ATCC BAA-1098 / SB2B) protein is Deoxyuridine 5'-triphosphate nucleotidohydrolase.